The chain runs to 387 residues: Exodeoxyribonuclease 7 large subunit (387 aa).

The protein belongs to the XseA family. As to quaternary structure, heterooligomer composed of large and small subunits.

It is found in the cytoplasm. The catalysed reaction is Exonucleolytic cleavage in either 5'- to 3'- or 3'- to 5'-direction to yield nucleoside 5'-phosphates.. Its function is as follows. Bidirectionally degrades single-stranded DNA into large acid-insoluble oligonucleotides, which are then degraded further into small acid-soluble oligonucleotides. This is Exodeoxyribonuclease 7 large subunit from Campylobacter jejuni (strain RM1221).